The sequence spans 341 residues: Platelet-activating factor receptor (341 aa).

At 1–16 the chain is on the extracellular side; that stretch reads MEHNGSFRVDSEFRYT. N-linked (GlcNAc...) asparagine glycosylation is present at Asn-4. A helical transmembrane segment spans residues 17–38; the sequence is LFPIVYSVIFILGVVANGYVLW. The Cytoplasmic portion of the chain corresponds to 39–54; it reads VFANLYPSKKLNEIKI. Residues 55-74 form a helical membrane-spanning segment; the sequence is FMVNLTMADLLFLITLPLWI. At 75 to 91 the chain is on the extracellular side; the sequence is VYYYNEGDWILPNFLCN. Cys-90 and Cys-173 are joined by a disulfide. The chain crosses the membrane as a helical span at residues 92–113; it reads VAGCLFFINTYCSVAFLGVITY. The Cytoplasmic segment spans residues 114–133; that stretch reads NRYQAVAYPIKTAQATTRKR. A helical membrane pass occupies residues 134–155; the sequence is GISLSLIIWVSIVATASYFLAT. Topologically, residues 156 to 184 are extracellular; sequence DSTNLVPNKDGSGNITRCFEHYEPYSVPI. A glycan (N-linked (GlcNAc...) asparagine) is linked at Asn-169. A helical membrane pass occupies residues 185–205; the sequence is LVVHVFIAFCFFLVFFLIFYC. At 206-233 the chain is on the cytoplasmic side; it reads NLVIIHTLLTQPMRQQRKAGVKRRALWM. A helical membrane pass occupies residues 234–254; the sequence is VCTVLAVFIICFVPHHVVQLP. The Extracellular portion of the chain corresponds to 255–275; sequence WTLAELGYQTNFHQAINDAHQ. The helical transmembrane segment at 276 to 295 threads the bilayer; sequence ITLCLLSTNCVLDPVIYCFL. Residues 296-341 lie on the Cytoplasmic side of the membrane; the sequence is TKKFRKHLSEKFYSMRSSRKCSRATSDTCTEVIVPANQTPIVSLKN.

The protein belongs to the G-protein coupled receptor 1 family. As to quaternary structure, interacts with ARRB1. Found in a range of organs. Expressed most strongly in spleen, followed by skeletal muscle, lung and small intestine. Expressed at moderate levels in the heart. Expressed at relatively low levels in the brain, liver and kidney.

The protein localises to the cell membrane. Its function is as follows. Receptor for platelet activating factor, a chemotactic phospholipid mediator that possesses potent inflammatory, smooth-muscle contractile and hypotensive activity. Seems to mediate its action via a G protein that activates a phosphatidylinositol-calcium second messenger system. The polypeptide is Platelet-activating factor receptor (Ptafr) (Mus musculus (Mouse)).